A 354-amino-acid chain; its full sequence is Uroporphyrinogen decarboxylase (354 aa).

Substrate contacts are provided by residues 27 to 31 (RQAGR), aspartate 77, tyrosine 154, serine 209, and histidine 327.

This sequence belongs to the uroporphyrinogen decarboxylase family. In terms of assembly, homodimer.

The protein resides in the cytoplasm. It catalyses the reaction uroporphyrinogen III + 4 H(+) = coproporphyrinogen III + 4 CO2. Its pathway is porphyrin-containing compound metabolism; protoporphyrin-IX biosynthesis; coproporphyrinogen-III from 5-aminolevulinate: step 4/4. In terms of biological role, catalyzes the decarboxylation of four acetate groups of uroporphyrinogen-III to yield coproporphyrinogen-III. In Shewanella baltica (strain OS223), this protein is Uroporphyrinogen decarboxylase.